A 325-amino-acid chain; its full sequence is tRNA N6-adenosine threonylcarbamoyltransferase (325 aa).

Positions 107, 111, and 127 each coordinate Fe cation. Residues 127–131, Asp159, Gly172, Glu176, and Asn257 contribute to the substrate site; that span reads YVSGG. Asp285 serves as a coordination point for Fe cation.

It belongs to the KAE1 / TsaD family. Monomer. Component of the KEOPS complex that consists of Kae1, Bud32, Cgi121 and Pcc1; the whole complex dimerizes. Fe(2+) serves as cofactor.

It localises to the cytoplasm. It carries out the reaction L-threonylcarbamoyladenylate + adenosine(37) in tRNA = N(6)-L-threonylcarbamoyladenosine(37) in tRNA + AMP + H(+). Its function is as follows. Required for the formation of a threonylcarbamoyl group on adenosine at position 37 (t(6)A37) in tRNAs that read codons beginning with adenine. Is a component of the KEOPS complex that is probably involved in the transfer of the threonylcarbamoyl moiety of threonylcarbamoyl-AMP (TC-AMP) to the N6 group of A37. Kae1 likely plays a direct catalytic role in this reaction, but requires other protein(s) of the complex to fulfill this activity. This Thermococcus kodakarensis (strain ATCC BAA-918 / JCM 12380 / KOD1) (Pyrococcus kodakaraensis (strain KOD1)) protein is tRNA N6-adenosine threonylcarbamoyltransferase.